The following is a 415-amino-acid chain: Histone acetyltransferase type B subunit 2 (415 aa).

5 WD repeats span residues 118–158 (ENNF…KTAI), 163–203 (PHED…ATDL), 211–251 (THKD…EPVS), 256–296 (PESE…TKSA), and 307–347 (GHSD…EEQA). Residues 349–353 (EDAED) are interaction with the histone H4 N-terminus. A WD 6 repeat occupies 364–404 (GHTGAVTDLSWCPYKDWTIGSVADDNIVHLWEIGKTLLNAE).

This sequence belongs to the WD repeat RBAP46/RBAP48/MSI1 family. Component of the HAT-B complex composed of at least HAT1 and HAT2. The HAT-B complex binds to histone H4 tail.

Its subcellular location is the cytoplasm. The protein localises to the nucleus. Functionally, regulatory subunit of the histone acetylase B (HAT-B) complex. The complex acetylates 'Lys-12' of histone H4 which is required for telomeric silencing. This Debaryomyces hansenii (strain ATCC 36239 / CBS 767 / BCRC 21394 / JCM 1990 / NBRC 0083 / IGC 2968) (Yeast) protein is Histone acetyltransferase type B subunit 2 (HAT2).